The sequence spans 315 residues: Olfactory receptor 3A2 (315 aa).

At 1-29 the chain is on the extracellular side; that stretch reads MEPEAGTNRTAVAEFILLGLVQTEEMQPV. Asn-8 carries N-linked (GlcNAc...) asparagine glycosylation. Residues 30–52 traverse the membrane as a helical segment; the sequence is VFVLFLFAYLVTIGGNLSILAAI. At 53 to 60 the chain is on the cytoplasmic side; it reads LVEPKLHA. The helical transmembrane segment at 61–82 threads the bilayer; it reads PMYFFLGNLSVLDVGCITVTVP. Residues 83–103 are Extracellular-facing; it reads AMLGRLLSHKSTISYDACLSQ. Cys-100 and Cys-192 are oxidised to a cystine. Residues 104–123 traverse the membrane as a helical segment; that stretch reads LFFFHLLAGMDCFLLTAMAY. Residues 124-143 are Cytoplasmic-facing; sequence DRFLAICWPLTYSTRMSQTV. The helical transmembrane segment at 144-161 threads the bilayer; it reads QRMLVAASWACAFTNALT. At 162–199 the chain is on the extracellular side; sequence HTVAMSTLNFCGPNEVNHFYCDLPQLFQLSCSSTQLNE. A helical transmembrane segment spans residues 200 to 223; it reads LLLFAVGFIMAGTPLVLIITSYSH. The Cytoplasmic segment spans residues 224–240; the sequence is VAAAVLRIRSVEGWKKA. A helical transmembrane segment spans residues 241-264; it reads FSTCGSHLTVVCLFFGTGIFNYMR. Residues 265–275 are Extracellular-facing; the sequence is LGSEEASDKDK. A helical membrane pass occupies residues 276-295; the sequence is GVGVFNTVINPMLNPLIYSL. The Cytoplasmic segment spans residues 296–315; sequence RNPDVQGALWRIFLGRRSLT.

Belongs to the G-protein coupled receptor 1 family.

Its subcellular location is the cell membrane. Odorant receptor. This is Olfactory receptor 3A2 (OR3A2) from Pan troglodytes (Chimpanzee).